The sequence spans 604 residues: Elongation factor 4 (604 aa).

Residues 2-184 (DHIRNFSIIA…AVITRMPAPR (183 aa)) form the tr-type G domain. Residues 14–19 (DHGKST) and 131–134 (NKMD) each bind GTP.

The protein belongs to the TRAFAC class translation factor GTPase superfamily. Classic translation factor GTPase family. LepA subfamily.

The protein resides in the cell inner membrane. It carries out the reaction GTP + H2O = GDP + phosphate + H(+). In terms of biological role, required for accurate and efficient protein synthesis under certain stress conditions. May act as a fidelity factor of the translation reaction, by catalyzing a one-codon backward translocation of tRNAs on improperly translocated ribosomes. Back-translocation proceeds from a post-translocation (POST) complex to a pre-translocation (PRE) complex, thus giving elongation factor G a second chance to translocate the tRNAs correctly. Binds to ribosomes in a GTP-dependent manner. The polypeptide is Elongation factor 4 (Methylibium petroleiphilum (strain ATCC BAA-1232 / LMG 22953 / PM1)).